A 296-amino-acid polypeptide reads, in one-letter code: Ribosomal RNA small subunit methyltransferase A (296 aa).

Residues Asn-30, Leu-32, Gly-57, Glu-78, Asp-103, and Asn-128 each coordinate S-adenosyl-L-methionine.

Belongs to the class I-like SAM-binding methyltransferase superfamily. rRNA adenine N(6)-methyltransferase family. RsmA subfamily.

It localises to the cytoplasm. The enzyme catalyses adenosine(1518)/adenosine(1519) in 16S rRNA + 4 S-adenosyl-L-methionine = N(6)-dimethyladenosine(1518)/N(6)-dimethyladenosine(1519) in 16S rRNA + 4 S-adenosyl-L-homocysteine + 4 H(+). Functionally, specifically dimethylates two adjacent adenosines (A1518 and A1519) in the loop of a conserved hairpin near the 3'-end of 16S rRNA in the 30S particle. May play a critical role in biogenesis of 30S subunits. The polypeptide is Ribosomal RNA small subunit methyltransferase A (Staphylococcus carnosus (strain TM300)).